The primary structure comprises 265 residues: tRNA pseudouridine synthase A (265 aa).

The active-site Nucleophile is D52. Y110 contributes to the substrate binding site. The disordered stretch occupies residues F244–G265.

The protein belongs to the tRNA pseudouridine synthase TruA family. As to quaternary structure, homodimer.

It catalyses the reaction uridine(38/39/40) in tRNA = pseudouridine(38/39/40) in tRNA. In terms of biological role, formation of pseudouridine at positions 38, 39 and 40 in the anticodon stem and loop of transfer RNAs. This chain is tRNA pseudouridine synthase A, found in Myxococcus xanthus.